Consider the following 234-residue polypeptide: Leucyl/phenylalanyl-tRNA--protein transferase (234 aa).

It belongs to the L/F-transferase family.

The protein localises to the cytoplasm. The catalysed reaction is N-terminal L-lysyl-[protein] + L-leucyl-tRNA(Leu) = N-terminal L-leucyl-L-lysyl-[protein] + tRNA(Leu) + H(+). It carries out the reaction N-terminal L-arginyl-[protein] + L-leucyl-tRNA(Leu) = N-terminal L-leucyl-L-arginyl-[protein] + tRNA(Leu) + H(+). It catalyses the reaction L-phenylalanyl-tRNA(Phe) + an N-terminal L-alpha-aminoacyl-[protein] = an N-terminal L-phenylalanyl-L-alpha-aminoacyl-[protein] + tRNA(Phe). Functionally, functions in the N-end rule pathway of protein degradation where it conjugates Leu, Phe and, less efficiently, Met from aminoacyl-tRNAs to the N-termini of proteins containing an N-terminal arginine or lysine. The sequence is that of Leucyl/phenylalanyl-tRNA--protein transferase from Shigella flexneri serotype 5b (strain 8401).